Here is a 305-residue protein sequence, read N- to C-terminus: MKKIRCALIGSGNIGTDLIYKIQRSPVLEPVWMVGIDPESEGLARAREMGLKTTAAGVDGLLPHVLEDNIQIAFDATSAYVHAENSRKLNELGVMMIDLTPAAIGPLCVPPVNLKEHTEKLEMNVNMISCAGQATIPIVHAISRIQSVSYGEIVASLASKSIGPGTRANLDEFTYTTSNAIEIVGGARKGKALAIINPADPPMMMRNTISCLTDEEPDEPRIIESVLAMIKEVQKYVPGYRLVNGPLFDGKRVTVFMEVAGLGDYLPKYAGNLDIMTAAATRTAEMFAEEILAGTIQLKPVEMAV.

11–14 (SGNI) serves as a coordination point for NAD(+). Cysteine 130 acts as the Acyl-thioester intermediate in catalysis. NAD(+)-binding positions include 161–169 (SIGPGTRAN) and asparagine 272.

Belongs to the acetaldehyde dehydrogenase family.

It catalyses the reaction acetaldehyde + NAD(+) + CoA = acetyl-CoA + NADH + H(+). The polypeptide is Acetaldehyde dehydrogenase 5 (Dechloromonas aromatica (strain RCB)).